Reading from the N-terminus, the 370-residue chain is uncharacterized protein (370 aa).

Positions 62 to 293 (ATVALVGFPS…LKERMWRALG (232 aa)) constitute an OBG-type G domain. Residues 68 to 75 (GFPSVGKS), 114 to 118 (DVPGL), and 243 to 246 (NKVD) each bind GTP. Residues 293–368 (GLIRIYMDKP…EDEDVLRVVA (76 aa)) form the TGS domain.

This sequence belongs to the TRAFAC class OBG-HflX-like GTPase superfamily. OBG GTPase family.

This is an uncharacterized protein from Halobacterium salinarum (strain ATCC 700922 / JCM 11081 / NRC-1) (Halobacterium halobium).